Consider the following 314-residue polypeptide: 4-hydroxy-3-methylbut-2-enyl diphosphate reductase (314 aa).

Cys12 contributes to the [4Fe-4S] cluster binding site. 2 residues coordinate (2E)-4-hydroxy-3-methylbut-2-enyl diphosphate: His41 and His74. Residues His41 and His74 each contribute to the dimethylallyl diphosphate site. The isopentenyl diphosphate site is built by His41 and His74. Cys96 contacts [4Fe-4S] cluster. His124 serves as a coordination point for (2E)-4-hydroxy-3-methylbut-2-enyl diphosphate. His124 serves as a coordination point for dimethylallyl diphosphate. Residue His124 coordinates isopentenyl diphosphate. Glu126 serves as the catalytic Proton donor. Thr168 provides a ligand contact to (2E)-4-hydroxy-3-methylbut-2-enyl diphosphate. Cys198 provides a ligand contact to [4Fe-4S] cluster. Residues Ser226, Ser227, Asn228, and Ser270 each contribute to the (2E)-4-hydroxy-3-methylbut-2-enyl diphosphate site. Residues Ser226, Ser227, Asn228, and Ser270 each coordinate dimethylallyl diphosphate. Ser226, Ser227, Asn228, and Ser270 together coordinate isopentenyl diphosphate.

The protein belongs to the IspH family. It depends on [4Fe-4S] cluster as a cofactor.

The catalysed reaction is isopentenyl diphosphate + 2 oxidized [2Fe-2S]-[ferredoxin] + H2O = (2E)-4-hydroxy-3-methylbut-2-enyl diphosphate + 2 reduced [2Fe-2S]-[ferredoxin] + 2 H(+). It carries out the reaction dimethylallyl diphosphate + 2 oxidized [2Fe-2S]-[ferredoxin] + H2O = (2E)-4-hydroxy-3-methylbut-2-enyl diphosphate + 2 reduced [2Fe-2S]-[ferredoxin] + 2 H(+). The protein operates within isoprenoid biosynthesis; dimethylallyl diphosphate biosynthesis; dimethylallyl diphosphate from (2E)-4-hydroxy-3-methylbutenyl diphosphate: step 1/1. It functions in the pathway isoprenoid biosynthesis; isopentenyl diphosphate biosynthesis via DXP pathway; isopentenyl diphosphate from 1-deoxy-D-xylulose 5-phosphate: step 6/6. Its function is as follows. Catalyzes the conversion of 1-hydroxy-2-methyl-2-(E)-butenyl 4-diphosphate (HMBPP) into a mixture of isopentenyl diphosphate (IPP) and dimethylallyl diphosphate (DMAPP). Acts in the terminal step of the DOXP/MEP pathway for isoprenoid precursor biosynthesis. The polypeptide is 4-hydroxy-3-methylbut-2-enyl diphosphate reductase (Pseudomonas aeruginosa (strain ATCC 15692 / DSM 22644 / CIP 104116 / JCM 14847 / LMG 12228 / 1C / PRS 101 / PAO1)).